The following is a 185-amino-acid chain: Ribosome-recycling factor (185 aa).

Belongs to the RRF family.

Its subcellular location is the cytoplasm. In terms of biological role, responsible for the release of ribosomes from messenger RNA at the termination of protein biosynthesis. May increase the efficiency of translation by recycling ribosomes from one round of translation to another. The chain is Ribosome-recycling factor from Pasteurella multocida (strain Pm70).